We begin with the raw amino-acid sequence, 264 residues long: Regulator of cytoskeleton and endocytosis RVS161 (264 aa).

The 225-residue stretch at 15-239 folds into the BAR domain; the sequence is ASVIVKDVDK…LDPASRDEYA (225 aa).

Its subcellular location is the cytoplasm. It localises to the cytoskeleton. Component of a cytoskeletal structure that is required for the formation of endocytic vesicles at the plasma membrane level. Plays an important role in virulence. This is Regulator of cytoskeleton and endocytosis RVS161 (RVS161) from Candida albicans (strain SC5314 / ATCC MYA-2876) (Yeast).